The chain runs to 205 residues: Small ribosomal subunit protein uS4 (205 aa).

The tract at residues 20–44 is disordered; the sequence is WGRPKSPVNRREYGPGQHGQRRKGK. An S4 RNA-binding domain is found at 94–154; that stretch reads SRLDAIVYRS…ERSKQLLLVL (61 aa).

This sequence belongs to the universal ribosomal protein uS4 family. As to quaternary structure, part of the 30S ribosomal subunit. Contacts protein S5. The interaction surface between S4 and S5 is involved in control of translational fidelity.

In terms of biological role, one of the primary rRNA binding proteins, it binds directly to 16S rRNA where it nucleates assembly of the body of the 30S subunit. Its function is as follows. With S5 and S12 plays an important role in translational accuracy. This is Small ribosomal subunit protein uS4 from Bartonella bacilliformis (strain ATCC 35685 / KC583 / Herrer 020/F12,63).